The chain runs to 643 residues: UPF0313 protein CLD_0573 (643 aa).

The region spanning Ala295–Ser566 is the Radical SAM core domain. Positions 309, 313, and 316 each coordinate [4Fe-4S] cluster. A disordered region spans residues Asn598–Lys643. Residues Pro600–Asn609 are compositionally biased toward basic residues. The segment covering Ala610–Asn621 has biased composition (low complexity). The segment covering Lys630–Lys643 has biased composition (basic residues).

It belongs to the UPF0313 family. [4Fe-4S] cluster serves as cofactor.

This Clostridium botulinum (strain Okra / Type B1) protein is UPF0313 protein CLD_0573.